The sequence spans 235 residues: Octanoyltransferase LIP2, mitochondrial (235 aa).

The N-terminal 32 residues, 1-32, are a transit peptide targeting the mitochondrion; that stretch reads MRSPRTLEVWKLGTVNYLKSLKLQEKLVSERK. The 185-residue stretch at 34-218 folds into the BPL/LPL catalytic domain; the sequence is HQIPDTLLSL…CLAKAFSYDD (185 aa). Substrate-binding positions include 79 to 86, 147 to 149, and 160 to 162; these read RGGDITFH, AIG, and GLA. C178 functions as the Acyl-thioester intermediate in the catalytic mechanism.

The protein belongs to the LipB family. As to expression, expressed in leaves. Expressed in roots, rosette leaves, cauline leaves, stems and siliques.

The protein localises to the mitochondrion. The enzyme catalyses octanoyl-[ACP] + L-lysyl-[protein] = N(6)-octanoyl-L-lysyl-[protein] + holo-[ACP] + H(+). It functions in the pathway protein modification; protein lipoylation via endogenous pathway; protein N(6)-(lipoyl)lysine from octanoyl-[acyl-carrier-protein]: step 1/2. Functionally, catalyzes the transfer of endogenously produced octanoic acid from octanoyl-acyl-carrier-protein onto the lipoyl domains of lipoate-dependent enzymes. Lipoyl-ACP can also act as a substrate although octanoyl-ACP is likely to be the physiological substrate. Together with LIP1 is essential for mitochondrial protein lipoylation during seed development. Required for the lipoylation of mitochondrial 2-oxoglutarate dehydrogenase component E2 proteins in leaves and roots. The chain is Octanoyltransferase LIP2, mitochondrial from Arabidopsis thaliana (Mouse-ear cress).